Consider the following 174-residue polypeptide: Methylated protein MJ0556 (174 aa).

2 CBS domains span residues 28–87 and 91–156; these read MISG…YLNV and MLKN…IIKE.

In terms of processing, methylated at an undetermined residue between Ser-2 and Asp-26.

The chain is Methylated protein MJ0556 from Methanocaldococcus jannaschii (strain ATCC 43067 / DSM 2661 / JAL-1 / JCM 10045 / NBRC 100440) (Methanococcus jannaschii).